Consider the following 436-residue polypeptide: Histidinol dehydrogenase (436 aa).

Residues Tyr-136, Gln-198, and Asn-221 each contribute to the NAD(+) site. Residues Ser-244, Gln-266, and His-269 each coordinate substrate. Zn(2+) contacts are provided by Gln-266 and His-269. Residues Glu-334 and His-335 each act as proton acceptor in the active site. 4 residues coordinate substrate: His-335, Asp-368, Glu-422, and His-427. Asp-368 serves as a coordination point for Zn(2+). Residue His-427 participates in Zn(2+) binding.

Belongs to the histidinol dehydrogenase family. The cofactor is Zn(2+).

The enzyme catalyses L-histidinol + 2 NAD(+) + H2O = L-histidine + 2 NADH + 3 H(+). It participates in amino-acid biosynthesis; L-histidine biosynthesis; L-histidine from 5-phospho-alpha-D-ribose 1-diphosphate: step 9/9. Its function is as follows. Catalyzes the sequential NAD-dependent oxidations of L-histidinol to L-histidinaldehyde and then to L-histidine. In Dehalococcoides mccartyi (strain ATCC BAA-2266 / KCTC 15142 / 195) (Dehalococcoides ethenogenes (strain 195)), this protein is Histidinol dehydrogenase.